We begin with the raw amino-acid sequence, 563 residues long: Ras and Rab interactor-like protein (563 aa).

Residues 181 to 208 (GWGTETPQQTEPETGQKYSLAPRKPTPH) form a disordered region. Residues 184-196 (TETPQQTEPETGQ) are compositionally biased toward low complexity. A VPS9 domain is found at 381–518 (AQELRRLRRR…IAHYQPDTGR (138 aa)). Positions 539 to 563 (TLHQQAQPTAQANQPFEEPWAIGDP) are disordered. Residues 542-553 (QQAQPTAQANQP) show a composition bias toward low complexity.

As to quaternary structure, interacts with RAB5A, RAB22A and MUSK. Detected in thymus and spleen (at protein level). Detected in lung, liver, kidney, spleen, thymus and skeletal muscle.

The protein resides in the cell projection. It is found in the ruffle. The protein localises to the cytoplasmic vesicle. Functionally, guanine nucleotide exchange factor (GEF) for RAB5A and RAB22A that activates RAB5A and RAB22A by exchanging bound GDP for free GTP. Plays a role in endocytosis via its role in activating Rab family members. The chain is Ras and Rab interactor-like protein (Rinl) from Mus musculus (Mouse).